Here is a 328-residue protein sequence, read N- to C-terminus: tRNA uridine(34) hydroxylase (328 aa).

The region spanning 130 to 224 is the Rhodanese domain; it reads LDEDTVVLDT…YGKDPEVQGE (95 aa). Residue Cys184 is the Cysteine persulfide intermediate of the active site.

It belongs to the TrhO family.

The enzyme catalyses uridine(34) in tRNA + AH2 + O2 = 5-hydroxyuridine(34) in tRNA + A + H2O. Functionally, catalyzes oxygen-dependent 5-hydroxyuridine (ho5U) modification at position 34 in tRNAs. The polypeptide is tRNA uridine(34) hydroxylase (Streptococcus pyogenes serotype M12 (strain MGAS2096)).